We begin with the raw amino-acid sequence, 354 residues long: S-adenosylmethionine:tRNA ribosyltransferase-isomerase (354 aa).

It belongs to the QueA family. As to quaternary structure, monomer.

It is found in the cytoplasm. It catalyses the reaction 7-aminomethyl-7-carbaguanosine(34) in tRNA + S-adenosyl-L-methionine = epoxyqueuosine(34) in tRNA + adenine + L-methionine + 2 H(+). The protein operates within tRNA modification; tRNA-queuosine biosynthesis. In terms of biological role, transfers and isomerizes the ribose moiety from AdoMet to the 7-aminomethyl group of 7-deazaguanine (preQ1-tRNA) to give epoxyqueuosine (oQ-tRNA). The polypeptide is S-adenosylmethionine:tRNA ribosyltransferase-isomerase (Salmonella dublin (strain CT_02021853)).